The chain runs to 2472 residues: Telomere-associated protein RIF1 (2472 aa).

Residues methionine 1–glycine 25 are disordered. Residue serine 402 is modified to Phosphoserine. Threonine 409 is modified (phosphothreonine). Serine 782, serine 979, and serine 1008 each carry phosphoserine. At threonine 1047 the chain carries Phosphothreonine. Residues leucine 1145–glutamate 1192 form a disordered region. A compositionally biased stretch (polar residues) spans serine 1148–asparagine 1169. Residue serine 1162 is modified to Phosphoserine. Threonine 1220 is subject to Phosphothreonine. A phosphoserine mark is found at serine 1236 and serine 1238. Composition is skewed to basic and acidic residues over residues alanine 1265–lysine 1279 and methionine 1306–glutamate 1315. Disordered stretches follow at residues alanine 1265–valine 1318, methionine 1398–proline 1464, and isoleucine 1479–glutamate 1587. Residues asparagine 1400–lysine 1412 are compositionally biased toward polar residues. A phosphoserine mark is found at serine 1422, serine 1454, and serine 1513. Composition is skewed to basic and acidic residues over residues serine 1431–proline 1464 and glutamate 1500–valine 1530. Phosphothreonine is present on threonine 1518. Residues serine 1542, serine 1552, serine 1554, serine 1556, and serine 1564 each carry the phosphoserine modification. Positions arginine 1565–asparagine 1574 are enriched in basic residues. Phosphoserine is present on residues serine 1576, serine 1579, serine 1613, serine 1616, serine 1688, serine 1693, serine 1706, and serine 1709. Residues threonine 1762–tyrosine 1782 are disordered. Positions valine 1771 to tyrosine 1782 are enriched in polar residues. Threonine 1806 bears the Phosphothreonine mark. Serine 1810 bears the Phosphoserine mark. A compositionally biased stretch (polar residues) spans alanine 1846–phenylalanine 1859. The disordered stretch occupies residues alanine 1846–lysine 1889. Phosphoserine occurs at positions 1873 and 1876. Positions leucine 1877–lysine 1889 are enriched in basic and acidic residues. The segment at glutamate 1924–isoleucine 2472 is interaction with condensed chromosomes in telophase. Residues serine 1926 and serine 1971 each carry the phosphoserine modification. The segment at glutamate 1992 to asparagine 2021 is disordered. The segment covering serine 2006–asparagine 2021 has biased composition (basic and acidic residues). Phosphoserine occurs at positions 2144 and 2161. Residue threonine 2167 is modified to Phosphothreonine. The segment at valine 2170–glutamate 2446 is interaction with ERCC6. A phosphoserine mark is found at serine 2172, serine 2176, serine 2195, serine 2196, and serine 2205. A compositionally biased stretch (polar residues) spans arginine 2227–alanine 2255. The tract at residues arginine 2227 to lysine 2269 is disordered. A phosphoserine mark is found at serine 2260, serine 2339, serine 2391, serine 2393, serine 2465, and serine 2471.

Belongs to the RIF1 family. As to quaternary structure, interacts with TP53BP1 (when phosphorylated by ATM). May interact with TRF2. Interacts with SHLD2. Interacts with ERCC6 (via WHD region). Interacts with ASTE1. In terms of tissue distribution, highly expressed in testis.

Its subcellular location is the nucleus. It localises to the chromosome. The protein localises to the telomere. The protein resides in the cytoplasm. It is found in the cytoskeleton. Its subcellular location is the spindle. Key regulator of TP53BP1 that plays a key role in the repair of double-strand DNA breaks (DSBs) in response to DNA damage: acts by promoting non-homologous end joining (NHEJ)-mediated repair of DSBs. In response to DNA damage, interacts with ATM-phosphorylated TP53BP1. Interaction with TP53BP1 leads to dissociate the interaction between NUDT16L1/TIRR and TP53BP1, thereby unmasking the tandem Tudor-like domain of TP53BP1 and allowing recruitment to DNA DSBs. Once recruited to DSBs, RIF1 and TP53BP1 act by promoting NHEJ-mediated repair of DSBs. In the same time, RIF1 and TP53BP1 specifically counteract the function of BRCA1 by blocking DSBs resection via homologous recombination (HR) during G1 phase. Also required for immunoglobulin class-switch recombination (CSR) during antibody genesis, a process that involves the generation of DNA DSBs. Promotes NHEJ of dysfunctional telomeres. This Homo sapiens (Human) protein is Telomere-associated protein RIF1.